A 135-amino-acid chain; its full sequence is Ribonuclease VapC35 (135 aa).

Residues isoleucine 2–alanine 123 enclose the PINc domain. Mg(2+) contacts are provided by glutamate 5 and aspartate 91.

This sequence belongs to the PINc/VapC protein family. Mg(2+) serves as cofactor.

Its function is as follows. Toxic component of a type II toxin-antitoxin (TA) system. An RNase. Its toxic effect is neutralized by coexpression with cognate antitoxin VapB35. The protein is Ribonuclease VapC35 of Mycobacterium tuberculosis (strain CDC 1551 / Oshkosh).